A 370-amino-acid polypeptide reads, in one-letter code: Vasopressin V2 receptor (370 aa).

Positions 1-10 (MLLASTTSAV) are enriched in polar residues. Residues 1 to 26 (MLLASTTSAVPRTLSPPTPAGNGSRE) are disordered. The Extracellular portion of the chain corresponds to 1-37 (MLLASTTSAVPRTLSPPTPAGNGSRELLDTRDPLLVQ). Residue N22 is glycosylated (N-linked (GlcNAc...) asparagine). A helical transmembrane segment spans residues 38 to 62 (AELALLSTVFVAVALSNGLVLGALA). Topologically, residues 63-76 (RRVRRGRWAPMHVF) are cytoplasmic. The chain crosses the membrane as a helical span at residues 77-97 (IGHLCLADLAVALFQVLPQLA). Topologically, residues 98 to 112 (WDATDRFRGPDALCR) are extracellular. A helical membrane pass occupies residues 113–134 (AVKYLQMVGMYASSYMILAMTL). The Cytoplasmic segment spans residues 135–158 (DRHRAICRPMLAYRHGGGARWNRP). Residues 159–179 (VLVAWAFSLILSLPQLFIFAQ) traverse the membrane as a helical segment. Residues 180-199 (RDVGNGSGVLDCWAHFAEPW) lie on the Extracellular side of the membrane. Residues 200–219 (GLRAYVTWIALMVFVAPALG) traverse the membrane as a helical segment. Residues 220 to 270 (IAACQVLIFREIHSSLVPGPAERAGGCRGGHRTGSPSEGARVSAAMAKTVR) are Cytoplasmic-facing. A helical transmembrane segment spans residues 271-292 (MTLVIVIVYVLCWAPFFLVQLW). Residues 293–307 (AAWDPQAPLEGAPFV) are Extracellular-facing. The helical transmembrane segment at 308 to 327 (LLMLLASLNSCTNPWIYAFF) threads the bilayer. The Cytoplasmic segment spans residues 328-370 (SSSVSSELRSLFCWARSRAPPSLGPQEESCATASSFLAKDTSS). A lipid anchor (S-palmitoyl cysteine) is attached at C340.

The protein belongs to the G-protein coupled receptor 1 family. Vasopressin/oxytocin receptor subfamily. As to quaternary structure, interacts with ARRDC4. Identified in a complex containing at least ARRDC4, V2R and HGS. Interacts with TMEM147.

It is found in the cell membrane. In terms of biological role, receptor for arginine vasopressin. The activity of this receptor is mediated by G proteins which activate adenylate cyclase. Involved in renal water reabsorption. The protein is Vasopressin V2 receptor (AVPR2) of Canis lupus familiaris (Dog).